We begin with the raw amino-acid sequence, 618 residues long: Serine--tRNA ligase, cytoplasmic (618 aa).

Thr417–Glu419 is an L-serine binding site. Position 448 to 450 (Arg448 to Glu450) interacts with ATP. Residue Glu472 participates in L-serine binding. Position 536–539 (Glu536–Ser539) interacts with ATP. Ser570 contacts L-serine.

Belongs to the class-II aminoacyl-tRNA synthetase family. Type-1 seryl-tRNA synthetase subfamily. As to quaternary structure, homodimer. The tRNA molecule binds across the dimer.

Its subcellular location is the cytoplasm. It carries out the reaction tRNA(Ser) + L-serine + ATP = L-seryl-tRNA(Ser) + AMP + diphosphate + H(+). The enzyme catalyses tRNA(Sec) + L-serine + ATP = L-seryl-tRNA(Sec) + AMP + diphosphate + H(+). It participates in aminoacyl-tRNA biosynthesis; selenocysteinyl-tRNA(Sec) biosynthesis; L-seryl-tRNA(Sec) from L-serine and tRNA(Sec): step 1/1. Catalyzes the attachment of serine to tRNA(Ser). Is also able to aminoacylate tRNA(Sec) with serine, to form the misacylated tRNA L-seryl-tRNA(Sec), which will be further converted into selenocysteinyl-tRNA(Sec). The polypeptide is Serine--tRNA ligase, cytoplasmic (Plasmodium falciparum (isolate 3D7)).